Consider the following 1025-residue polypeptide: Beta-galactosidase (1025 aa).

Glu482 acts as the Proton donor in catalysis. Glu551 acts as the Nucleophile in catalysis.

This sequence belongs to the glycosyl hydrolase 2 family.

The enzyme catalyses Hydrolysis of terminal non-reducing beta-D-galactose residues in beta-D-galactosides.. The sequence is that of Beta-galactosidase (LAC4) from Kluyveromyces lactis (strain ATCC 8585 / CBS 2359 / DSM 70799 / NBRC 1267 / NRRL Y-1140 / WM37) (Yeast).